The chain runs to 380 residues: XK-related protein 9 (380 aa).

8 consecutive transmembrane segments (helical) span residues 10–30, 39–59, 81–101, 167–187, 228–248, 264–284, 294–314, and 329–349; these read LLSA…AALV, VVCA…TQVF, LPVV…GIFI, CSLV…WALV, ALLL…WLLG, SLEF…FFNV, ITYY…LFVL, and TLMA…YLLL.

It belongs to the XK family.

The protein resides in the cell membrane. It carries out the reaction a 1,2-diacyl-sn-glycero-3-phospho-L-serine(in) = a 1,2-diacyl-sn-glycero-3-phospho-L-serine(out). Its function is as follows. Phospholipid scramblase that promotes phosphatidylserine exposure on apoptotic cell surface. Phosphatidylserine is a specific marker only present at the surface of apoptotic cells and acts as a specific signal for engulfment. This is XK-related protein 9 from Tetraodon nigroviridis (Spotted green pufferfish).